Consider the following 381-residue polypeptide: 4-hydroxyphenylpyruvate dioxygenase (381 aa).

VOC domains lie at 22 to 156 (GMDA…LVDR) and 184 to 338 (AIDH…IFTK). Positions 187, 270, and 349 each coordinate Fe cation.

The protein belongs to the 4HPPD family. In terms of assembly, homodimer. Requires Fe cation as cofactor.

It catalyses the reaction 3-(4-hydroxyphenyl)pyruvate + O2 = homogentisate + CO2. It functions in the pathway amino-acid degradation; L-phenylalanine degradation; acetoacetate and fumarate from L-phenylalanine: step 3/6. This Streptomyces avermitilis (strain ATCC 31267 / DSM 46492 / JCM 5070 / NBRC 14893 / NCIMB 12804 / NRRL 8165 / MA-4680) protein is 4-hydroxyphenylpyruvate dioxygenase (hpd).